A 333-amino-acid chain; its full sequence is Transcription initiation factor IIB (333 aa).

Residues 33-64 form a TFIIB-type zinc finger; that stretch reads EVYRCPICGNDRFVYNYERGEIVCIVCGAVVQ. Zn(2+) contacts are provided by cysteine 37, cysteine 40, cysteine 56, and cysteine 59. A run of 2 repeats spans residues 149–232 and 243–324.

The protein belongs to the TFIIB family.

Stabilizes TBP binding to an archaeal box-A promoter. Also responsible for recruiting RNA polymerase II to the pre-initiation complex (DNA-TBP-TFIIB). The polypeptide is Transcription initiation factor IIB (Pyrobaculum islandicum (strain DSM 4184 / JCM 9189 / GEO3)).